The primary structure comprises 98 residues: Large ribosomal subunit protein uL23 (98 aa).

This sequence belongs to the universal ribosomal protein uL23 family. In terms of assembly, part of the 50S ribosomal subunit. Contacts protein L29, and trigger factor when it is bound to the ribosome.

In terms of biological role, one of the early assembly proteins it binds 23S rRNA. One of the proteins that surrounds the polypeptide exit tunnel on the outside of the ribosome. Forms the main docking site for trigger factor binding to the ribosome. This chain is Large ribosomal subunit protein uL23, found in Methylorubrum populi (strain ATCC BAA-705 / NCIMB 13946 / BJ001) (Methylobacterium populi).